Consider the following 572-residue polypeptide: Phosphoglucomutase-1 (572 aa).

Residues Thr23, Arg27, 120–121, and Lys133 each bind substrate; that span reads SH. The active-site Phosphoserine intermediate is the Ser120. Ser120 is a Mg(2+) binding site. 3 residues coordinate Mg(2+): Asp288, Asp290, and Asp292. Substrate contacts are provided by residues 292 to 293, Thr356, 375 to 377, Lys388, and Arg524; these read DR and EES.

Belongs to the phosphohexose mutase family. It depends on Mg(2+) as a cofactor.

The protein resides in the cytoplasm. It carries out the reaction alpha-D-glucose 1-phosphate = alpha-D-glucose 6-phosphate. Its function is as follows. This enzyme participates in both the breakdown and synthesis of glucose. This chain is Phosphoglucomutase-1 (pgmA), found in Dictyostelium discoideum (Social amoeba).